We begin with the raw amino-acid sequence, 146 residues long: MNSETGSIMAFLYSRWSVPIYERELPDHFQVPSLYVPPPSVFEETDTVSTFKKTYSLNVKLFHLDSVQALDEADRLADAIREARNMIPLLSESGEKTGDMVRISQIETRVGDRGEAAMVIRWSSRYYYHKTEQPVLQDIDMNSGVK.

This sequence to B.subtilis YqbJ.

This chain is Phage-like element PBSX protein XkdJ (xkdJ), found in Bacillus subtilis (strain 168).